Consider the following 583-residue polypeptide: Aspartate--tRNA ligase (583 aa).

E174 contributes to the L-aspartate binding site. Residues Q198–K201 form an aspartate region. Residue R220 participates in L-aspartate binding. ATP contacts are provided by residues R220 to E222 and Q229. An L-aspartate-binding site is contributed by H443. Residue E477 participates in ATP binding. R484 contacts L-aspartate. G529–R532 is an ATP binding site.

It belongs to the class-II aminoacyl-tRNA synthetase family. Type 1 subfamily. As to quaternary structure, homodimer.

It localises to the cytoplasm. The catalysed reaction is tRNA(Asp) + L-aspartate + ATP = L-aspartyl-tRNA(Asp) + AMP + diphosphate. In terms of biological role, catalyzes the attachment of L-aspartate to tRNA(Asp) in a two-step reaction: L-aspartate is first activated by ATP to form Asp-AMP and then transferred to the acceptor end of tRNA(Asp). The sequence is that of Aspartate--tRNA ligase from Streptococcus thermophilus (strain ATCC BAA-250 / LMG 18311).